Reading from the N-terminus, the 317-residue chain is Porphobilinogen deaminase (317 aa).

S-(dipyrrolylmethanemethyl)cysteine is present on cysteine 245.

This sequence belongs to the HMBS family. As to quaternary structure, monomer. The cofactor is dipyrromethane.

The catalysed reaction is 4 porphobilinogen + H2O = hydroxymethylbilane + 4 NH4(+). It functions in the pathway porphyrin-containing compound metabolism; protoporphyrin-IX biosynthesis; coproporphyrinogen-III from 5-aminolevulinate: step 2/4. It participates in porphyrin-containing compound metabolism; chlorophyll biosynthesis. Tetrapolymerization of the monopyrrole PBG into the hydroxymethylbilane pre-uroporphyrinogen in several discrete steps. The protein is Porphobilinogen deaminase of Synechococcus sp. (strain RCC307).